The sequence spans 144 residues: Large ribosomal subunit protein uL15 (144 aa).

Residues 1–49 (MRLNTLSPAAGSKSAPKRVGRGIGSGLGKTAGRGHKGQKSRSGGGVRVG) form a disordered region. Residues 21–31 (RGIGSGLGKTA) are compositionally biased toward gly residues.

It belongs to the universal ribosomal protein uL15 family. As to quaternary structure, part of the 50S ribosomal subunit.

Its function is as follows. Binds to the 23S rRNA. The polypeptide is Large ribosomal subunit protein uL15 (Shewanella frigidimarina (strain NCIMB 400)).